The chain runs to 485 residues: Glutamyl-tRNA(Gln) amidotransferase subunit A (485 aa).

Residues Lys79 and Ser154 each act as charge relay system in the active site. Ser178 acts as the Acyl-ester intermediate in catalysis.

Belongs to the amidase family. GatA subfamily. Heterotrimer of A, B and C subunits.

It catalyses the reaction L-glutamyl-tRNA(Gln) + L-glutamine + ATP + H2O = L-glutaminyl-tRNA(Gln) + L-glutamate + ADP + phosphate + H(+). Its function is as follows. Allows the formation of correctly charged Gln-tRNA(Gln) through the transamidation of misacylated Glu-tRNA(Gln) in organisms which lack glutaminyl-tRNA synthetase. The reaction takes place in the presence of glutamine and ATP through an activated gamma-phospho-Glu-tRNA(Gln). The chain is Glutamyl-tRNA(Gln) amidotransferase subunit A from Geobacillus thermodenitrificans (strain NG80-2).